A 373-amino-acid chain; its full sequence is Diels-Alderase (373 aa).

The protein belongs to the Diels-Alderase family.

It carries out the reaction (5S)-3-[(2E,6R,8E,10E,12E)-2,6-dimethyltetradeca-2,8,10,12-tetraenoyl]-5-(hydroxymethyl)pyrrolidine-2,4-dione = trichosetin. It functions in the pathway mycotoxin biosynthesis. In terms of biological role, hybrid PKS-NRPS synthetase; part of the gene cluster that mediates the biosynthesis of trichosetin, a trans-fused decalin-containing tetramic acid with antimicrobial activity. The PKS module of PKS-NRPS1 together with the enoylreductase (ER) catalyze the formation of the polyketide unit which is then conjugated to L-serine by the condensation domain of the PKS-NRPS1 NRPS module. Activity of the Dieckmann cyclase domain (RED) results in release of the Dieckmann product intermediate. Diels-Alderase (DA) is involved in endo-selective Diels-Alder cycloaddition to form the decalin ring, leading to the production of N-desmethylequisetin also called trichosetin. The cluster does not contain the equisetin N-methyltransferase and consequently, trichosetin is isolated as final product. This Gibberella fujikuroi (strain CBS 195.34 / IMI 58289 / NRRL A-6831) (Bakanae and foot rot disease fungus) protein is Diels-Alderase.